A 513-amino-acid polypeptide reads, in one-letter code: ATP synthase subunit alpha (513 aa).

G169–T176 is a binding site for ATP.

Belongs to the ATPase alpha/beta chains family. F-type ATPases have 2 components, CF(1) - the catalytic core - and CF(0) - the membrane proton channel. CF(1) has five subunits: alpha(3), beta(3), gamma(1), delta(1), epsilon(1). CF(0) has three main subunits: a(1), b(2) and c(9-12). The alpha and beta chains form an alternating ring which encloses part of the gamma chain. CF(1) is attached to CF(0) by a central stalk formed by the gamma and epsilon chains, while a peripheral stalk is formed by the delta and b chains.

It is found in the cell inner membrane. The catalysed reaction is ATP + H2O + 4 H(+)(in) = ADP + phosphate + 5 H(+)(out). Functionally, produces ATP from ADP in the presence of a proton gradient across the membrane. The alpha chain is a regulatory subunit. This Bordetella bronchiseptica (strain ATCC BAA-588 / NCTC 13252 / RB50) (Alcaligenes bronchisepticus) protein is ATP synthase subunit alpha.